We begin with the raw amino-acid sequence, 217 residues long: LexA repressor (217 aa).

The H-T-H motif DNA-binding region spans 28–48 (RAEIAAEFGFSSPNAAEEHLR). Catalysis depends on for autocatalytic cleavage activity residues Ser136 and Lys173.

It belongs to the peptidase S24 family. In terms of assembly, homodimer.

The enzyme catalyses Hydrolysis of Ala-|-Gly bond in repressor LexA.. Its function is as follows. Represses a number of genes involved in the response to DNA damage (SOS response), including recA and lexA. In the presence of single-stranded DNA, RecA interacts with LexA causing an autocatalytic cleavage which disrupts the DNA-binding part of LexA, leading to derepression of the SOS regulon and eventually DNA repair. The sequence is that of LexA repressor from Cupriavidus necator (strain ATCC 17699 / DSM 428 / KCTC 22496 / NCIMB 10442 / H16 / Stanier 337) (Ralstonia eutropha).